The sequence spans 2477 residues: Spectrin alpha chain, non-erythrocytic 1 (2477 aa).

An N-terminal domain region spans residues 1-14 (MDPSGVKVLETAED). Spectrin repeat units lie at residues 45-146 (RFQF…VKLL), 150-251 (KLVQ…QGKL), 256-358 (EVQR…ARLN), 361-465 (YRLQ…QYEQ), 468-570 (DLQL…AQLA), 574-676 (HLQQ…KLRE), 679-781 (QQQQ…QKLA), 785-888 (RLQQ…DLED), 891-969 (QAQQ…ETGK), and 1096-1162 (LFRE…SEGL). The region spanning 967–1026 (TGKELVLALYDYQEKSPREVTMKKGDILTLLNSTNKDWWKVEVNDRQGFVPAAYVKKLDP) is the SH3 domain. Tyr1176 is modified (phosphotyrosine). Spectrin repeat units lie at residues 1234-1336 (EVQR…EKLG), 1339-1442 (HDLQ…MMLD), 1446-1549 (ELQL…KLGE), 1552-1661 (TLQQ…KLKE), 1664-1767 (KQQN…KLNE), 1769-1873 (HRLH…RLEE), 1876-1979 (EYQQ…KLDE), 1983-2086 (FLQF…KLLE), 2097-2199 (LFLT…LELQ), and 2211-2315 (LRQE…NLEQ). Residues 2257 to 2477 (HQEIRAMRSQ…IEFTRSLFVN (221 aa)) form a C-terminal domain region. EF-hand domains follow at residues 2328–2363 (EALKEFSMMFKHFDKDKSGRLNHQEFKSCLRSLGYD), 2371–2406 (EPDPEFESILDTVDPNRDGHVSLQEYMAFMISRETE), and 2409–2444 (KSSEEIESAFRALSSERKPYVTKEELYQNLTREQAD). Ca(2+) is bound by residues Asp2341, Asp2343, Ser2345, Arg2347, Glu2352, Asp2384, Asn2386, Asp2388, His2390, and Glu2395.

This sequence belongs to the spectrin family. Like erythrocyte spectrin, the spectrin-like proteins are capable of forming dimers which can further associate to tetramers. Interacts with ACP1. In terms of processing, phosphorylation of Tyr-1176 decreases sensitivity to cleavage by calpain in vitro.

The protein resides in the cytoplasm. It localises to the cytoskeleton. Its subcellular location is the cell cortex. Functionally, morphologically, spectrin-like proteins appear to be related to spectrin, showing a flexible rod-like structure. They can bind actin but seem to differ in their calmodulin-binding activity. In nonerythroid tissues, spectrins, in association with some other proteins, may play an important role in membrane organization. The sequence is that of Spectrin alpha chain, non-erythrocytic 1 (SPTAN1) from Gallus gallus (Chicken).